The following is a 324-amino-acid chain: Archaeosine synthase subunit beta (324 aa).

Residues 12–254 (GKPGTALFII…LIWAKRKFPN (243 aa)) enclose the Radical SAM core domain. Cys27, Cys36, and Cys39 together coordinate [4Fe-4S] cluster.

It belongs to the radical SAM superfamily. RaSEA family. In terms of assembly, forms a robust complex with the archaeosine synthase alpha subunit ArcS, likely an alpha(2)beta(2) heterotetrameric structure. [4Fe-4S] cluster is required as a cofactor.

The enzyme catalyses 7-N-[(5S)-5-amino-5-carboxypentyl]formamidino-7-deazaguanosine(15) in tRNA + S-adenosyl-L-methionine = archaeosine(15) in tRNA + L-1-piperideine-6-carboxylate + 5'-deoxyadenosine + L-methionine + 2 H(+). It functions in the pathway tRNA modification; archaeosine-tRNA biosynthesis. In terms of biological role, radical SAM enzyme involved in the synthesis of archaeosine, a modified nucleoside present in the dihydrouridine loop (D-loop) of archaeal tRNAs. Catalyzes the cleavage of the C(epsilon)-N bond of the lysine moiety of q0kN15-tRNA, leading to the formation of archaeosine at position 15 in tRNAs. The sequence is that of Archaeosine synthase subunit beta from Thermococcus kodakarensis (strain ATCC BAA-918 / JCM 12380 / KOD1) (Pyrococcus kodakaraensis (strain KOD1)).